The sequence spans 1022 residues: Sodium/potassium-transporting ATPase subunit alpha (1022 aa).

A propeptide spanning residues 1–5 (MGKGA) is cleaved from the precursor. Residues 1-34 (MGKGAASEKYQPAATSENAKNSKKSKSKTTDLDE) are disordered. Residues 6-87 (ASEKYQPAAT…NALTPPPTTP (82 aa)) lie on the Cytoplasmic side of the membrane. At Ser-16 the chain carries Phosphoserine; by PKC. Positions 82-84 (PPP) are interaction with phosphoinositide-3 kinase. The chain crosses the membrane as a helical span at residues 88–108 (EWIKFCRQLFGGFSILLWTGA). Residues 109–131 (ILCFLAYGIQVATVDNPANDNLY) lie on the Lumenal side of the membrane. The chain crosses the membrane as a helical span at residues 132–152 (LGVVLSTVVIITGCFSYYQEA). The Cytoplasmic segment spans residues 153–288 (KSSKIMDSFK…VGQTPIAAEI (136 aa)). Positions 215-235 (NSSLTGESEPQSRSPEYSSEN) are disordered. Residues 289–308 (EHFIHIITGVAVFLGVSFFI) traverse the membrane as a helical segment. Topologically, residues 309 to 320 (LSLILGYTWLEA) are lumenal. A helical membrane pass occupies residues 321–338 (VIFLIGIIVANVPEGLLA). At 339 to 771 (TVTVCLTLTA…EEGRLIFDNL (433 aa)) the chain is on the cytoplasmic side. Asp-376 functions as the 4-aspartylphosphate intermediate in the catalytic mechanism. Mg(2+) is bound by residues Asp-716 and Asp-720. A helical membrane pass occupies residues 772-791 (KKSIAYTLTSNIPEITPFLV). At 792–801 (FIIANVPLPL) the chain is on the lumenal side. The chain crosses the membrane as a helical span at residues 802 to 822 (GTVTILCIDLGTDMVPAISLA). The Cytoplasmic portion of the chain corresponds to 823 to 842 (YERAESDIMKRQPRNPKTDK). The helical transmembrane segment at 843–865 (LVNERLISMAYGQIGMIQALGGF) threads the bilayer. Over 866-917 (FSYFVILAENGFLPIDLIGIREKWDELWTQDLEDSYGQQWTYEQRKIVEYTC) the chain is Lumenal. A helical transmembrane segment spans residues 918-937 (HTSFFVSIVIVQWADLIICK). The Cytoplasmic segment spans residues 938–950 (TRRNSIFQQGMKN). Ser-942 is modified (phosphoserine; by PKA). A helical transmembrane segment spans residues 951–969 (KILIFGLFEETALAAFLSY). The Lumenal portion of the chain corresponds to 970–984 (TPGTDIALRMYPLKP). A helical transmembrane segment spans residues 985 to 1005 (SWWFCAFPYSLIIFLYDEARR). The Cytoplasmic portion of the chain corresponds to 1006–1022 (FILRRNPGGWVEQETYY).

This sequence belongs to the cation transport ATPase (P-type) (TC 3.A.3) family. Type IIC subfamily. In terms of assembly, the sodium/potassium-transporting ATPase is composed of a catalytic alpha subunit, an auxiliary non-catalytic beta subunit and an additional regulatory subunit.

It is found in the cell membrane. It carries out the reaction K(+)(out) + Na(+)(in) + ATP + H2O = K(+)(in) + Na(+)(out) + ADP + phosphate + H(+). This is the catalytic component of the active enzyme, which catalyzes the hydrolysis of ATP coupled with the exchange of sodium and potassium ions across the plasma membrane. This action creates the electrochemical gradient of sodium and potassium ions, providing the energy for active transport of various nutrients. This Tetronarce californica (Pacific electric ray) protein is Sodium/potassium-transporting ATPase subunit alpha.